A 142-amino-acid polypeptide reads, in one-letter code: Large ribosomal subunit protein uL13 (142 aa).

This sequence belongs to the universal ribosomal protein uL13 family. Part of the 50S ribosomal subunit.

In terms of biological role, this protein is one of the early assembly proteins of the 50S ribosomal subunit, although it is not seen to bind rRNA by itself. It is important during the early stages of 50S assembly. This chain is Large ribosomal subunit protein uL13, found in Delftia acidovorans (strain DSM 14801 / SPH-1).